Consider the following 284-residue polypeptide: MNEATKRTIVKEIDAILYEEHKVLDHGFIRVVDYMGSDSAIVQAARVSYGKGTKQISQDEALIKYLMRHHHTTPFEMCEIKFHVKLPIFVARQWIRHRTANVNEYSARYSILDNEFYTPKPEQVAKQSDNNKQGSGEAFDPDTSKEIIDSLINDSNLVYSHYEKFIEQGLAREIARTNLMLNYYTQFYWKIDLHNLLHFLKLRADKHAQYEIRVYAEVMLDIIKKWVPLAYNAFVEYCLESACISRTGLEIIRKLIKGENVTREESNIGKREWGELMSILDKQS.

The region spanning 27 to 237 (GFIRVVDYMG…PLAYNAFVEY (211 aa)) is the ThyX domain. FAD-binding positions include Thr-73, 96–98 (RHR), and Glu-104. Residues 93 to 96 (QWIR) and 104 to 108 (EYSAR) each bind dUMP. Residues 96-106 (RHRTANVNEYS) carry the ThyX motif motif. Positions 122 to 142 (EQVAKQSDNNKQGSGEAFDPD) are disordered. Residues 125–134 (AKQSDNNKQG) are compositionally biased toward polar residues. Residue Arg-176 participates in dUMP binding. FAD contacts are provided by residues 192-194 (DLH) and His-198. Arg-203 is a dUMP binding site. The Involved in ionization of N3 of dUMP, leading to its activation role is filled by Arg-203.

Belongs to the thymidylate synthase ThyX family. In terms of assembly, homotetramer. Requires FAD as cofactor.

It carries out the reaction dUMP + (6R)-5,10-methylene-5,6,7,8-tetrahydrofolate + NADPH + H(+) = dTMP + (6S)-5,6,7,8-tetrahydrofolate + NADP(+). Its pathway is pyrimidine metabolism; dTTP biosynthesis. Functionally, catalyzes the reductive methylation of 2'-deoxyuridine-5'-monophosphate (dUMP) to 2'-deoxythymidine-5'-monophosphate (dTMP) while utilizing 5,10-methylenetetrahydrofolate (mTHF) as the methyl donor, and NADPH and FADH(2) as the reductant. The protein is Flavin-dependent thymidylate synthase of Wolbachia pipientis wMel.